A 159-amino-acid polypeptide reads, in one-letter code: MSGAGVPDMPALHAEDVTLAIVASTWHETICDALLDGARKVAEQAGVTDPTVVRVLGAIEIPVVAQALARTHDAVIALGVVIRGETPHFDYVCDAVTQGLTRVSLDASTPVANGVLTVNTENQALDRAGLPNSAEDKGAQAAAAALSTALTLRQLASPS.

Residues tryptophan 26, 58 to 60, and 80 to 82 each bind 5-amino-6-(D-ribitylamino)uracil; these read AIE and VVI. A (2S)-2-hydroxy-3-oxobutyl phosphate-binding site is contributed by 85–86; that stretch reads ET. The active-site Proton donor is histidine 88. Asparagine 113 is a 5-amino-6-(D-ribitylamino)uracil binding site. Arginine 127 is a binding site for (2S)-2-hydroxy-3-oxobutyl phosphate.

The protein belongs to the DMRL synthase family. Homopentamer.

The enzyme catalyses (2S)-2-hydroxy-3-oxobutyl phosphate + 5-amino-6-(D-ribitylamino)uracil = 6,7-dimethyl-8-(1-D-ribityl)lumazine + phosphate + 2 H2O + H(+). Its pathway is cofactor biosynthesis; riboflavin biosynthesis; riboflavin from 2-hydroxy-3-oxobutyl phosphate and 5-amino-6-(D-ribitylamino)uracil: step 1/2. Catalyzes the formation of 6,7-dimethyl-8-ribityllumazine by condensation of 5-amino-6-(D-ribitylamino)uracil with 3,4-dihydroxy-2-butanone 4-phosphate. This is the penultimate step in the biosynthesis of riboflavin. The polypeptide is 6,7-dimethyl-8-ribityllumazine synthase (Mycolicibacterium gilvum (strain PYR-GCK) (Mycobacterium gilvum (strain PYR-GCK))).